The primary structure comprises 257 residues: Snake venom serine protease KN2 (257 aa).

The first 18 residues, 1–18 (MVLIRVLANLLILQLSYA), serve as a signal peptide directing secretion. Positions 19 to 24 (QKSSEL) are excised as a propeptide. In terms of domain architecture, Peptidase S1 spans 25–248 (VIGGHPCNIN…HLDWIKSIIA (224 aa)). Disulfide bonds link Cys-31-Cys-162, Cys-49-Cys-65, Cys-97-Cys-255, Cys-141-Cys-209, Cys-173-Cys-188, and Cys-199-Cys-224. Catalysis depends on charge relay system residues His-64 and Asp-109. N-linked (GlcNAc...) asparagine glycosylation is found at Asn-120 and Asn-121. Ser-203 functions as the Charge relay system in the catalytic mechanism.

This sequence belongs to the peptidase S1 family. Snake venom subfamily. Monomer. In terms of tissue distribution, expressed by the venom gland.

The protein resides in the secreted. Snake venom serine protease that may act in the hemostasis system of the prey. The polypeptide is Snake venom serine protease KN2 (Trimeresurus stejnegeri (Chinese green tree viper)).